Here is a 113-residue protein sequence, read N- to C-terminus: Colicin-E1 immunity protein (113 aa).

This protein is able to protect a cell, which harbors the plasmid ColE1 encoding colicin E1, against colicin E1. This chain is Colicin-E1 immunity protein (imm), found in Escherichia coli.